The sequence spans 104 residues: Small ribosomal subunit protein uS10 (104 aa).

The protein belongs to the universal ribosomal protein uS10 family. As to quaternary structure, part of the 30S ribosomal subunit.

Its function is as follows. Involved in the binding of tRNA to the ribosomes. This is Small ribosomal subunit protein uS10 from Maricaulis maris (strain MCS10) (Caulobacter maris).